A 255-amino-acid polypeptide reads, in one-letter code: Sulfate transporter CysZ (255 aa).

4 consecutive transmembrane segments (helical) span residues 26–46 (LFVLLPLAINLVLFVGLIYFA), 71–91 (LLWPLFVVLVVLMVFFTFTML), 150–170 (LFILSFIPVVNLIAAPLWLLF), and 211–231 (IVYLVLLVPVVNLLMMPAAVA).

This sequence belongs to the CysZ family.

It localises to the cell inner membrane. In terms of biological role, high affinity, high specificity proton-dependent sulfate transporter, which mediates sulfate uptake. Provides the sulfur source for the cysteine synthesis pathway. This is Sulfate transporter CysZ from Pseudomonas fluorescens (strain SBW25).